The chain runs to 461 residues: UDP-glucose 6-dehydrogenase TuaD (461 aa).

Residues 3 to 20, Val-12, Asp-31, Lys-36, Thr-122, and Glu-156 each bind NAD(+); that span reads KIAVIGTGYVGLVSGTCF. Residues 152–156, Lys-205, Asn-209, 250–254, and Gly-258 each bind substrate; these read EFLRE and FLKAG. Catalysis depends on Cys-261, which acts as the Nucleophile. Residue Lys-264 coordinates NAD(+). Position 321 (Lys-321) interacts with substrate. Position 328 (Arg-328) interacts with NAD(+).

Belongs to the UDP-glucose/GDP-mannose dehydrogenase family. Phosphorylated by YwqD and dephosphorylated by YwqE in vitro.

The protein localises to the cytoplasm. The enzyme catalyses UDP-alpha-D-glucose + 2 NAD(+) + H2O = UDP-alpha-D-glucuronate + 2 NADH + 3 H(+). The protein operates within nucleotide-sugar biosynthesis; UDP-alpha-D-glucuronate biosynthesis; UDP-alpha-D-glucuronate from UDP-alpha-D-glucose: step 1/1. Activated by phosphorylation; inhibited by dephosphorylation. In terms of biological role, catalyzes the conversion of UDP-glucose into UDP-glucuronate, one of the precursors of teichuronic acid. The chain is UDP-glucose 6-dehydrogenase TuaD (tuaD) from Bacillus subtilis (strain 168).